Consider the following 494-residue polypeptide: Glucose-6-phosphate 1-dehydrogenase (494 aa).

Positions 46 and 150 each coordinate NADP(+). 4 residues coordinate substrate: His-180, Lys-184, Glu-218, and Asp-237. His-242 functions as the Proton acceptor in the catalytic mechanism. Lys-342 serves as a coordination point for substrate.

Belongs to the glucose-6-phosphate dehydrogenase family.

It catalyses the reaction D-glucose 6-phosphate + NADP(+) = 6-phospho-D-glucono-1,5-lactone + NADPH + H(+). It participates in carbohydrate degradation; pentose phosphate pathway; D-ribulose 5-phosphate from D-glucose 6-phosphate (oxidative stage): step 1/3. Functionally, catalyzes the oxidation of glucose 6-phosphate to 6-phosphogluconolactone. This chain is Glucose-6-phosphate 1-dehydrogenase, found in Aggregatibacter actinomycetemcomitans (Actinobacillus actinomycetemcomitans).